Here is a 90-residue protein sequence, read N- to C-terminus: Small ribosomal subunit protein bS20 (90 aa).

Residues 1–25 form a disordered region; it reads MANSPSAKKRAKQAEKRRSHNASLR. Residues 7 to 20 show a composition bias toward basic residues; that stretch reads AKKRAKQAEKRRSH.

The protein belongs to the bacterial ribosomal protein bS20 family.

In terms of biological role, binds directly to 16S ribosomal RNA. The protein is Small ribosomal subunit protein bS20 of Pseudomonas fluorescens (strain Pf0-1).